Here is a 65-residue protein sequence, read N- to C-terminus: Large ribosomal subunit protein uL29 (65 aa).

This sequence belongs to the universal ribosomal protein uL29 family.

This is Large ribosomal subunit protein uL29 from Bacteroides thetaiotaomicron (strain ATCC 29148 / DSM 2079 / JCM 5827 / CCUG 10774 / NCTC 10582 / VPI-5482 / E50).